The chain runs to 203 residues: Small ribosomal subunit protein uS5 (203 aa).

A compositionally biased stretch (basic and acidic residues) spans 1–25 (MPGRTRRDGGSESGGKDRRDRRDGG). Residues 1-36 (MPGRTRRDGGSESGGKDRRDRRDGGRGGAAQEKTPQ) are disordered. The S5 DRBM domain occupies 36–99 (QFERVVTINR…EEAKKNFFRV (64 aa)).

The protein belongs to the universal ribosomal protein uS5 family. In terms of assembly, part of the 30S ribosomal subunit. Contacts proteins S4 and S8.

With S4 and S12 plays an important role in translational accuracy. Functionally, located at the back of the 30S subunit body where it stabilizes the conformation of the head with respect to the body. This is Small ribosomal subunit protein uS5 from Saccharopolyspora erythraea (strain ATCC 11635 / DSM 40517 / JCM 4748 / NBRC 13426 / NCIMB 8594 / NRRL 2338).